Consider the following 290-residue polypeptide: Arylamine N-acetyltransferase 1 (290 aa).

The residue at position 1 (M1) is an N-acetylmethionine. C68 (acyl-thioester intermediate) is an active-site residue. S103 contacts CoA. Position 106–107 (106–107 (VH)) interacts with substrate. Residues H107 and D122 contribute to the active site. Residue Y208 participates in CoA binding.

Belongs to the arylamine N-acetyltransferase family.

It localises to the cytoplasm. It catalyses the reaction an arylamine + acetyl-CoA = an N-acetylarylamine + CoA. In terms of biological role, participates in the detoxification of a plethora of hydrazine and arylamine drugs. Acetylates both arylamines and arylalkylamines. The protein is Arylamine N-acetyltransferase 1 (Nat1) of Rattus norvegicus (Rat).